Consider the following 72-residue polypeptide: uncharacterized protein (72 aa).

This sequence belongs to the asfivirus I73R family.

The protein resides in the virion. This is an uncharacterized protein from Ornithodoros (relapsing fever ticks).